Here is a 570-residue protein sequence, read N- to C-terminus: Sulfite reductase [NADPH] hemoprotein beta-component (570 aa).

[4Fe-4S] cluster-binding residues include cysteine 434, cysteine 440, cysteine 479, and cysteine 483. Cysteine 483 contacts siroheme.

The protein belongs to the nitrite and sulfite reductase 4Fe-4S domain family. As to quaternary structure, alpha(8)-beta(8). The alpha component is a flavoprotein, the beta component is a hemoprotein. It depends on siroheme as a cofactor. Requires [4Fe-4S] cluster as cofactor.

It carries out the reaction hydrogen sulfide + 3 NADP(+) + 3 H2O = sulfite + 3 NADPH + 4 H(+). It participates in sulfur metabolism; hydrogen sulfide biosynthesis; hydrogen sulfide from sulfite (NADPH route): step 1/1. Component of the sulfite reductase complex that catalyzes the 6-electron reduction of sulfite to sulfide. This is one of several activities required for the biosynthesis of L-cysteine from sulfate. The protein is Sulfite reductase [NADPH] hemoprotein beta-component of Salmonella gallinarum (strain 287/91 / NCTC 13346).